The primary structure comprises 230 residues: Leucyl/phenylalanyl-tRNA--protein transferase (230 aa).

This sequence belongs to the L/F-transferase family.

Its subcellular location is the cytoplasm. The catalysed reaction is N-terminal L-lysyl-[protein] + L-leucyl-tRNA(Leu) = N-terminal L-leucyl-L-lysyl-[protein] + tRNA(Leu) + H(+). It catalyses the reaction N-terminal L-arginyl-[protein] + L-leucyl-tRNA(Leu) = N-terminal L-leucyl-L-arginyl-[protein] + tRNA(Leu) + H(+). The enzyme catalyses L-phenylalanyl-tRNA(Phe) + an N-terminal L-alpha-aminoacyl-[protein] = an N-terminal L-phenylalanyl-L-alpha-aminoacyl-[protein] + tRNA(Phe). Its function is as follows. Functions in the N-end rule pathway of protein degradation where it conjugates Leu, Phe and, less efficiently, Met from aminoacyl-tRNAs to the N-termini of proteins containing an N-terminal arginine or lysine. In Proteus mirabilis (strain HI4320), this protein is Leucyl/phenylalanyl-tRNA--protein transferase.